Here is a 128-residue protein sequence, read N- to C-terminus: Secreted RxLR effector protein 57 (128 aa).

Residues 1–31 form the signal peptide; that stretch reads MHRKRLRVVLSATLLDLITCVQLMLDPLVRS. Residues 58-61 carry the RxLR motif; the sequence is RILR.

The protein belongs to the RxLR effector family.

It is found in the secreted. Its subcellular location is the host nucleus. The protein resides in the host cytoplasm. Its function is as follows. Secreted effector that completely suppresses the host cell death induced by cell death-inducing proteins. The chain is Secreted RxLR effector protein 57 from Plasmopara viticola (Downy mildew of grapevine).